Consider the following 247-residue polypeptide: Protein At-4/1 (247 aa).

Coiled coils occupy residues 39–126 and 182–247; these read VESS…YKIR and LLME…LSSS.

As to quaternary structure, interacts with viral tomato spotted wilt virus (TSWV) movement protein NSM, which is involved in cell-to cell spread of viral genome and enlargement of the host plasmodesmata size exclusion limit (SEL). In terms of tissue distribution, expressed in leaves (at protein level).

Its subcellular location is the endoplasmic reticulum. The protein resides in the cell junction. It localises to the plasmodesma. Involved in intra- and inter-cellular trafficking through plasmodesmata (PD). The chain is Protein At-4/1 from Arabidopsis thaliana (Mouse-ear cress).